The primary structure comprises 90 residues: Conotoxin Rg9.1 (90 aa).

A signal peptide spans 1–20 (MHLSLARSAVLILLLLFALG). The propeptide occupies 21 to 60 (NFVGVQPGQITRDADHGINLRSLRKQMSRSPLVKGAFCGQ). Intrachain disulfides connect cysteine 58–cysteine 71, cysteine 62–cysteine 73, and cysteine 67–cysteine 80.

It belongs to the conotoxin P superfamily. As to expression, expressed by the venom duct.

The protein localises to the secreted. In terms of biological role, probable neurotoxin that inhibits ion channels. The sequence is that of Conotoxin Rg9.1 from Conus regius (Crown cone).